Here is a 449-residue protein sequence, read N- to C-terminus: Tripartite motif-containing protein 64B (449 aa).

An RING-type zinc finger spans residues 15-56; the sequence is CCICVNYFIDPVTIDCGHSFCRPCLCLCSEEGRAPMRCPSCR. Residues 87–128 form a B box-type zinc finger; that stretch reads SSDNICVLHEETKELFCEADKRLLCGPCSESPEHMAHSHSPI. Positions 92, 95, 114, and 120 each coordinate Zn(2+). The stretch at 189-225 forms a coiled coil; that stretch reads LDEEEQRHLQALEREAEELFQQLQDSQVRMTQHLERM. The 182-residue stretch at 268 to 449 folds into the B30.2/SPRY domain; the sequence is ELTSWCITGV…LRPFFCFGCT (182 aa).

Belongs to the TRIM/RBCC family.

This chain is Tripartite motif-containing protein 64B (TRIM64B), found in Homo sapiens (Human).